Reading from the N-terminus, the 240-residue chain is MSTATRSVAPRAHVLVAVKELHAAKTRLSGVFDTDDRTGLVLSMLRDTLAVVSDVATVVGVTVVTPDPAVARLARSVGAHVYADPAPVAAGDPADEGGTEHGLNAALAAAAEHVRRNESGVDVVALQADLPSLRGGEFGEALAAARTGGRSVVVDHHGTGTAALFSCDPEVPLDPRFGPGSAKRHLESGARPLDGHWPGLRTDVDTADDLDAAQALGVGPATRAALDALEHSAPSHCGNE.

Residues threonine 161, glycine 178, and serine 181 each coordinate phosphoenolpyruvate.

Belongs to the CofC family.

It carries out the reaction phosphoenolpyruvate + GTP + H(+) = enolpyruvoyl-2-diphospho-5'-guanosine + diphosphate. It participates in cofactor biosynthesis; coenzyme F420 biosynthesis. Its function is as follows. Guanylyltransferase that catalyzes the activation of phosphoenolpyruvate (PEP) as enolpyruvoyl-2-diphospho-5'-guanosine, via the condensation of PEP with GTP. It is involved in the biosynthesis of coenzyme F420, a hydride carrier cofactor. The chain is Phosphoenolpyruvate guanylyltransferase from Rhodococcus opacus (strain B4).